The following is a 280-amino-acid chain: Ribosomal RNA small subunit methyltransferase A (280 aa).

Positions 15, 17, 42, 64, 89, and 109 each coordinate S-adenosyl-L-methionine.

This sequence belongs to the class I-like SAM-binding methyltransferase superfamily. rRNA adenine N(6)-methyltransferase family. RsmA subfamily.

The protein resides in the cytoplasm. The enzyme catalyses adenosine(1518)/adenosine(1519) in 16S rRNA + 4 S-adenosyl-L-methionine = N(6)-dimethyladenosine(1518)/N(6)-dimethyladenosine(1519) in 16S rRNA + 4 S-adenosyl-L-homocysteine + 4 H(+). In terms of biological role, specifically dimethylates two adjacent adenosines (A1518 and A1519) in the loop of a conserved hairpin near the 3'-end of 16S rRNA in the 30S particle. May play a critical role in biogenesis of 30S subunits. This Prochlorococcus marinus (strain MIT 9313) protein is Ribosomal RNA small subunit methyltransferase A.